We begin with the raw amino-acid sequence, 500 residues long: Lysine--tRNA ligase (500 aa).

2 residues coordinate Mg(2+): Glu-411 and Glu-418.

The protein belongs to the class-II aminoacyl-tRNA synthetase family. Homodimer. Mg(2+) serves as cofactor.

The protein localises to the cytoplasm. It carries out the reaction tRNA(Lys) + L-lysine + ATP = L-lysyl-tRNA(Lys) + AMP + diphosphate. The polypeptide is Lysine--tRNA ligase (Actinobacillus pleuropneumoniae serotype 7 (strain AP76)).